We begin with the raw amino-acid sequence, 198 residues long: Holliday junction resolvase RecU (198 aa).

Positions 1-21 are disordered; the sequence is MVNYPHKLSSQKRQPSLSQPK. Positions 11–21 are enriched in polar residues; that stretch reads QKRQPSLSQPK. Residues threonine 81, aspartate 83, glutamate 96, and glutamine 115 each coordinate Mg(2+).

This sequence belongs to the RecU family. Mg(2+) serves as cofactor.

The protein localises to the cytoplasm. The enzyme catalyses Endonucleolytic cleavage at a junction such as a reciprocal single-stranded crossover between two homologous DNA duplexes (Holliday junction).. Functionally, endonuclease that resolves Holliday junction intermediates in genetic recombination. Cleaves mobile four-strand junctions by introducing symmetrical nicks in paired strands. Promotes annealing of linear ssDNA with homologous dsDNA. Required for DNA repair, homologous recombination and chromosome segregation. The protein is Holliday junction resolvase RecU of Streptococcus pneumoniae (strain Taiwan19F-14).